The primary structure comprises 367 residues: NADH-quinone oxidoreductase subunit D (367 aa).

Belongs to the complex I 49 kDa subunit family. As to quaternary structure, NDH-1 is composed of 14 different subunits. Subunits NuoB, C, D, E, F, and G constitute the peripheral sector of the complex.

It is found in the cell inner membrane. It catalyses the reaction a quinone + NADH + 5 H(+)(in) = a quinol + NAD(+) + 4 H(+)(out). Functionally, NDH-1 shuttles electrons from NADH, via FMN and iron-sulfur (Fe-S) centers, to quinones in the respiratory chain. The immediate electron acceptor for the enzyme in this species is believed to be ubiquinone. Couples the redox reaction to proton translocation (for every two electrons transferred, four hydrogen ions are translocated across the cytoplasmic membrane), and thus conserves the redox energy in a proton gradient. In Thermosipho melanesiensis (strain DSM 12029 / CIP 104789 / BI429), this protein is NADH-quinone oxidoreductase subunit D.